Here is a 513-residue protein sequence, read N- to C-terminus: Na(+)/H(+) antiporter NhaB (513 aa).

A run of 12 helical transmembrane segments spans residues Leu-23–Ala-43, Ile-52–Ile-72, Leu-97–Phe-117, Leu-120–Phe-140, Phe-144–Ile-164, Leu-202–Pro-222, Phe-238–Leu-258, Ala-303–Ile-323, Thr-348–Ile-368, Leu-391–Ile-411, Ala-447–Ile-467, and Val-475–Phe-495.

The protein belongs to the NhaB Na(+)/H(+) (TC 2.A.34) antiporter family.

The protein resides in the cell inner membrane. The catalysed reaction is 2 Na(+)(in) + 3 H(+)(out) = 2 Na(+)(out) + 3 H(+)(in). Its function is as follows. Na(+)/H(+) antiporter that extrudes sodium in exchange for external protons. This is Na(+)/H(+) antiporter NhaB from Shigella flexneri serotype 5b (strain 8401).